A 246-amino-acid chain; its full sequence is Pyridoxine 5'-phosphate synthase (246 aa).

Asparagine 12 serves as a coordination point for 3-amino-2-oxopropyl phosphate. Residue 14-15 (DH) coordinates 1-deoxy-D-xylulose 5-phosphate. Arginine 23 is a 3-amino-2-oxopropyl phosphate binding site. Histidine 48 functions as the Proton acceptor in the catalytic mechanism. Residues arginine 50 and histidine 55 each coordinate 1-deoxy-D-xylulose 5-phosphate. The active-site Proton acceptor is the glutamate 75. Threonine 105 provides a ligand contact to 1-deoxy-D-xylulose 5-phosphate. Histidine 196 (proton donor) is an active-site residue. 3-amino-2-oxopropyl phosphate contacts are provided by residues glycine 197 and 218-219 (GH).

It belongs to the PNP synthase family. As to quaternary structure, homooctamer; tetramer of dimers.

Its subcellular location is the cytoplasm. It carries out the reaction 3-amino-2-oxopropyl phosphate + 1-deoxy-D-xylulose 5-phosphate = pyridoxine 5'-phosphate + phosphate + 2 H2O + H(+). The protein operates within cofactor biosynthesis; pyridoxine 5'-phosphate biosynthesis; pyridoxine 5'-phosphate from D-erythrose 4-phosphate: step 5/5. Its function is as follows. Catalyzes the complicated ring closure reaction between the two acyclic compounds 1-deoxy-D-xylulose-5-phosphate (DXP) and 3-amino-2-oxopropyl phosphate (1-amino-acetone-3-phosphate or AAP) to form pyridoxine 5'-phosphate (PNP) and inorganic phosphate. The polypeptide is Pyridoxine 5'-phosphate synthase (Thiobacillus denitrificans (strain ATCC 25259 / T1)).